A 277-amino-acid chain; its full sequence is S-formylglutathione hydrolase FrmB (277 aa).

Active-site charge relay system residues include Ser145, Asp221, and His254.

The protein belongs to the esterase D family.

It carries out the reaction S-formylglutathione + H2O = formate + glutathione + H(+). Functionally, serine hydrolase involved in the detoxification of formaldehyde. Hydrolyzes S-formylglutathione to glutathione and formate. The protein is S-formylglutathione hydrolase FrmB (frmB) of Escherichia coli O6:H1 (strain CFT073 / ATCC 700928 / UPEC).